Here is a 596-residue protein sequence, read N- to C-terminus: Elongation factor 4 (596 aa).

The tr-type G domain occupies 2–183 (ENIRNFCIIA…AIIQRIPPPK (182 aa)). Residues 14–19 (DHGKST) and 130–133 (NKID) contribute to the GTP site.

It belongs to the TRAFAC class translation factor GTPase superfamily. Classic translation factor GTPase family. LepA subfamily.

The protein resides in the cell inner membrane. The enzyme catalyses GTP + H2O = GDP + phosphate + H(+). Required for accurate and efficient protein synthesis under certain stress conditions. May act as a fidelity factor of the translation reaction, by catalyzing a one-codon backward translocation of tRNAs on improperly translocated ribosomes. Back-translocation proceeds from a post-translocation (POST) complex to a pre-translocation (PRE) complex, thus giving elongation factor G a second chance to translocate the tRNAs correctly. Binds to ribosomes in a GTP-dependent manner. In Cytophaga hutchinsonii (strain ATCC 33406 / DSM 1761 / CIP 103989 / NBRC 15051 / NCIMB 9469 / D465), this protein is Elongation factor 4.